Here is a 260-residue protein sequence, read N- to C-terminus: Cell wall synthesis protein Wag31 (260 aa).

The stretch at 31–64 (FLDLVENELTRLIEENSDLRQRINELDQELAAGG) forms a coiled coil. Position 73 is a phosphothreonine (Thr-73). The stretch at 161 to 196 (MLADAQSRSEAQLRQAQEKADALQADAERKHSEIMG) forms a coiled coil. The disordered stretch occupies residues 233–260 (ELGQRGSAAPVDSNADAGGFDQFNRGKN).

Belongs to the DivIVA family. Forms homooligomers. Post-translationally, phosphorylated by PknA. Phosphorylation enhances polar localization, which in turn heightens polar peptidoglycan biosynthesis.

The protein resides in the cytoplasm. Its function is as follows. Important for maintaining cell shape and cell wall integrity by localizing peptidoglycan synthesis to the cell poles. The sequence is that of Cell wall synthesis protein Wag31 (wag31) from Mycobacterium tuberculosis (strain CDC 1551 / Oshkosh).